A 418-amino-acid polypeptide reads, in one-letter code: Alpha-(1-&gt;3)-arabinofuranosyltransferase (418 aa).

The next 11 membrane-spanning stretches (helical) occupy residues 25–45, 81–101, 102–122, 125–145, 153–173, 183–203, 210–230, 266–286, 293–312, 327–349, and 372–392; these read NAVA…VLAI, YLYN…THFT, LARW…FGLL, LSGW…AMLT, IFSN…WCVV, VIGL…LPLV, LILG…LVPG, MEIT…LALL, PYFW…FFLS, IFTL…AYFF, and ATVG…IWFI.

This sequence belongs to the glycosyltransferase 87 family.

It is found in the cell membrane. It catalyses the reaction Adds an alpha-D-arabinofuranosyl group from trans,octacis-decaprenylphospho-beta-D-arabinofuranose at the 3-O-position of an alpha-(1-&gt;5)-arabinofuranan chain attached to a beta-(1-&gt;5)-galactofuranan chain.. It functions in the pathway cell wall biogenesis; cell wall polysaccharide biosynthesis. Functionally, involved in the biosynthesis of the arabinogalactan (AG) region of the mycolylarabinogalactan-peptidoglycan (mAGP) complex, an essential component of the corynebacterial cell wall. Catalyzes the addition of an arabinofuranosyl (Araf) residue from the sugar donor beta-D-arabinofuranosyl-1-monophosphoryldecaprenol (DPA) on the C-3 of an alpha-(1-&gt;5)-linked Araf from the arabinan backbone of AG. In Corynebacterium glutamicum (strain ATCC 13032 / DSM 20300 / JCM 1318 / BCRC 11384 / CCUG 27702 / LMG 3730 / NBRC 12168 / NCIMB 10025 / NRRL B-2784 / 534), this protein is Alpha-(1-&gt;3)-arabinofuranosyltransferase.